The chain runs to 943 residues: Isoleucine--tRNA ligase (943 aa).

The 'HIGH' region signature appears at 59–69 (PYANGQIHLGH). L-isoleucyl-5'-AMP is bound at residue Glu-577. The short motif at 618–622 (KMSKS) is the 'KMSKS' region element. ATP is bound at residue Lys-621. Residues Cys-906, Cys-909, Cys-926, and Cys-929 each contribute to the Zn(2+) site.

This sequence belongs to the class-I aminoacyl-tRNA synthetase family. IleS type 1 subfamily. In terms of assembly, monomer. Requires Zn(2+) as cofactor.

It is found in the cytoplasm. It catalyses the reaction tRNA(Ile) + L-isoleucine + ATP = L-isoleucyl-tRNA(Ile) + AMP + diphosphate. Catalyzes the attachment of isoleucine to tRNA(Ile). As IleRS can inadvertently accommodate and process structurally similar amino acids such as valine, to avoid such errors it has two additional distinct tRNA(Ile)-dependent editing activities. One activity is designated as 'pretransfer' editing and involves the hydrolysis of activated Val-AMP. The other activity is designated 'posttransfer' editing and involves deacylation of mischarged Val-tRNA(Ile). This chain is Isoleucine--tRNA ligase, found in Xanthomonas axonopodis pv. citri (strain 306).